We begin with the raw amino-acid sequence, 200 residues long: Pyridoxine/pyridoxamine 5'-phosphate oxidase (200 aa).

FMN is bound by residues 49-54, 64-65, arginine 70, lysine 71, and glutamine 93; these read RMLLLK and YT. A substrate-binding site is contributed by lysine 54. Substrate contacts are provided by tyrosine 111, arginine 115, and serine 119. FMN contacts are provided by residues 128–129 and tryptophan 173; that span reads QS. 179 to 181 lines the substrate pocket; it reads RLH. Arginine 183 provides a ligand contact to FMN.

It belongs to the pyridoxamine 5'-phosphate oxidase family. As to quaternary structure, homodimer. It depends on FMN as a cofactor.

The enzyme catalyses pyridoxamine 5'-phosphate + O2 + H2O = pyridoxal 5'-phosphate + H2O2 + NH4(+). It catalyses the reaction pyridoxine 5'-phosphate + O2 = pyridoxal 5'-phosphate + H2O2. It functions in the pathway cofactor metabolism; pyridoxal 5'-phosphate salvage; pyridoxal 5'-phosphate from pyridoxamine 5'-phosphate: step 1/1. Its pathway is cofactor metabolism; pyridoxal 5'-phosphate salvage; pyridoxal 5'-phosphate from pyridoxine 5'-phosphate: step 1/1. Its function is as follows. Catalyzes the oxidation of either pyridoxine 5'-phosphate (PNP) or pyridoxamine 5'-phosphate (PMP) into pyridoxal 5'-phosphate (PLP). The sequence is that of Pyridoxine/pyridoxamine 5'-phosphate oxidase from Gluconobacter oxydans (strain 621H) (Gluconobacter suboxydans).